The primary structure comprises 285 residues: Acetylglutamate kinase (285 aa).

Substrate-binding positions include 64 to 65, R86, and N181; that span reads GG.

Belongs to the acetylglutamate kinase family. ArgB subfamily.

It is found in the cytoplasm. It carries out the reaction N-acetyl-L-glutamate + ATP = N-acetyl-L-glutamyl 5-phosphate + ADP. Its pathway is amino-acid biosynthesis; L-arginine biosynthesis; N(2)-acetyl-L-ornithine from L-glutamate: step 2/4. Functionally, catalyzes the ATP-dependent phosphorylation of N-acetyl-L-glutamate. This chain is Acetylglutamate kinase, found in Clostridium beijerinckii (strain ATCC 51743 / NCIMB 8052) (Clostridium acetobutylicum).